The sequence spans 193 residues: CASP-like protein 1F3 (193 aa).

The interval 1 to 25 (MASPQNTSQKRFFQANSPGGMPTAS) is disordered. The Cytoplasmic portion of the chain corresponds to 1 to 35 (MASPQNTSQKRFFQANSPGGMPTASQSQRSRILAQ). The helical transmembrane segment at 36–56 (ITLRFLAIAFTVTAIPVMITA) threads the bilayer. Residues 57–78 (KEPVSLLGLAITPSYKQSSAMK) are Extracellular-facing. Residues 79–99 (FLLGVNATVFAFTALSMLFVW) traverse the membrane as a helical segment. Over 100–118 (PLRRSGSKPINYFFLHLHD) the chain is Cytoplasmic. Residues 119–139 (MVMTLLLISGCAAATAVGYLS) form a helical membrane-spanning segment. The Extracellular portion of the chain corresponds to 140-161 (QYGQPETYWSPICDIVKKFCHQ). Residues 162–182 (MLISTVLSYLAFFCYLALNIL) form a helical membrane-spanning segment. The Cytoplasmic segment spans residues 183–193 (SVHKLMSRATE).

It belongs to the Casparian strip membrane proteins (CASP) family. As to quaternary structure, homodimer and heterodimers.

The protein localises to the cell membrane. This is CASP-like protein 1F3 from Populus trichocarpa (Western balsam poplar).